We begin with the raw amino-acid sequence, 247 residues long: Complement C1q subcomponent subunit A (247 aa).

The signal sequence occupies residues 1–24 (MEAPRGWLVIMISVLAVSLASSAA). The tract at residues 26–116 (DTCRDLDGRD…NPGNIKDQRR (91 aa)) is disordered. Basic and acidic residues predominate over residues 27–38 (TCRDLDGRDGAA). The Collagen-like domain maps to 33 to 111 (GRDGAARKPG…KGIKGNPGNI (79 aa)). 2 positions are modified to 4-hydroxyproline: P41 and P47. 5-hydroxylysine is present on K50. O-linked (Gal...) hydroxylysine glycosylation occurs at K50. P56 and P59 each carry 4-hydroxyproline. At K69 the chain carries 5-hydroxylysine. O-linked (Gal...) hydroxylysine glycosylation is present at K69. Residues P81 and P87 each carry the 4-hydroxyproline modification. The span at 98-109 (LPGLKGIKGNPG) shows a compositional bias: low complexity. At K102 the chain carries 5-hydroxylysine. An O-linked (Gal...) hydroxylysine glycan is attached at K102. Residues 112–247 (KDQRRPAFSA…FSGFLIFPST (136 aa)) form the C1q domain. C174 and C192 are disulfide-bonded. Residue Q201 coordinates Ca(2+).

As to quaternary structure, core component of the complement C1 complex, a calcium-dependent complex composed of 1 molecule of the C1Q subcomplex, 2 molecules of C1R and 2 molecules of C1S. The C1Q subcomplex is composed 18 subunits: 3 chains of C1QA, C1QB, and C1QC trimerize to form 6 collagen-like triple helices connected to six globular ligand-recognition modules (C1q domain). Interacts with CR1 (via Sushi 24 and Sushi 25 domains). Interacts (via C-terminus) with CD33; this interaction activates CD33 inhibitory motifs. Post-translationally, O-linked glycans are assumed to be the Glc-Gal disaccharides typically found as secondary modifications of hydroxylated lysines in collagen-like domains.

The protein localises to the secreted. It localises to the cell surface. With respect to regulation, the C1Q subcomplex is inhibited by sulfated molecules, such as triterpenoid sulfates, heparan sulfate, or chondroitin sulfates. Functionally, core component of the complement C1 complex, a multiprotein complex that initiates the classical pathway of the complement system, a cascade of proteins that leads to phagocytosis and breakdown of pathogens and signaling that strengthens the adaptive immune system. The classical complement pathway is initiated by the C1Q subcomplex of the C1 complex, which specifically binds IgG or IgM immunoglobulins complexed with antigens, forming antigen-antibody complexes on the surface of pathogens: C1QA, together with C1QB and C1QC, specifically recognizes and binds the Fc regions of IgG or IgM via its C1q domain. Immunoglobulin-binding activates the proenzyme C1R, which cleaves C1S, initiating the proteolytic cascade of the complement system. The C1Q subcomplex is activated by a hexamer of IgG complexed with antigens, while it is activated by a pentameric IgM. The C1Q subcomplex also recognizes and binds phosphatidylserine exposed on the surface of cells undergoing programmed cell death, possibly promoting activation of the complement system. The protein is Complement C1q subcomponent subunit A (C1QA) of Sus scrofa (Pig).